Consider the following 127-residue polypeptide: Glycine cleavage system H protein (127 aa).

The Lipoyl-binding domain occupies 22–104; sequence EVVIGITHFA…YEGAWMVKVE (83 aa). Position 63 is an N6-lipoyllysine (Lys-63).

Belongs to the GcvH family. The glycine cleavage system is composed of four proteins: P, T, L and H. It depends on (R)-lipoate as a cofactor.

The glycine cleavage system catalyzes the degradation of glycine. The H protein shuttles the methylamine group of glycine from the P protein to the T protein. In terms of biological role, is also involved in protein lipoylation via its role as an octanoyl/lipoyl carrier protein intermediate. This chain is Glycine cleavage system H protein, found in Bacillus cereus (strain B4264).